Reading from the N-terminus, the 163-residue chain is Homoaconitase small subunit (163 aa).

It belongs to the LeuD family. In terms of assembly, heterodimer of HacA and HacB.

The catalysed reaction is (2R,3S)-homoisocitrate = cis-homoaconitate + H2O. Its pathway is amino-acid biosynthesis; L-lysine biosynthesis via AAA pathway; L-alpha-aminoadipate from 2-oxoglutarate: step 3/5. Is not inhibited by lysine. In terms of biological role, catalyzes the reversible hydration of cis-homoaconitate ((Z)-but-1-ene-1,2,4-tricarboxylate) to homoisocitrate ((1R,2S)-1-hydroxybutane-1,2,4-tricarboxylate). Can catalyze neither the dehydration of (R)-homocitrate ((2R)-2-hydroxybutane-1,2,4-tricarboxylate) into cis-homoaconitate in vitro, nor the reverse reaction. Is not active toward (S)-homocitrate, cis-aconitate or citrate as substrate. This chain is Homoaconitase small subunit (hacB), found in Thermus thermophilus (strain ATCC BAA-163 / DSM 7039 / HB27).